We begin with the raw amino-acid sequence, 181 residues long: Alkyl hydroperoxide reductase AhpD (181 aa).

Cysteine 131 serves as the catalytic Proton donor. A disulfide bridge links cysteine 131 with cysteine 134. Cysteine 134 serves as the catalytic Cysteine sulfenic acid (-SOH) intermediate.

This sequence belongs to the AhpD family.

The enzyme catalyses N(6)-[(R)-dihydrolipoyl]-L-lysyl-[lipoyl-carrier protein] + a hydroperoxide = N(6)-[(R)-lipoyl]-L-lysyl-[lipoyl-carrier protein] + an alcohol + H2O. Antioxidant protein with alkyl hydroperoxidase activity. Required for the reduction of the AhpC active site cysteine residues and for the regeneration of the AhpC enzyme activity. This Rhodopseudomonas palustris (strain BisB18) protein is Alkyl hydroperoxide reductase AhpD.